The primary structure comprises 316 residues: Acetyl-coenzyme A carboxylase carboxyl transferase subunit alpha (316 aa).

The region spanning 40–293 is the CoA carboxyltransferase C-terminal domain; the sequence is LEKRSRDALR…GDLIAKTMKE (254 aa).

The protein belongs to the AccA family. Acetyl-CoA carboxylase is a heterohexamer composed of biotin carboxyl carrier protein (AccB), biotin carboxylase (AccC) and two subunits each of ACCase subunit alpha (AccA) and ACCase subunit beta (AccD).

The protein resides in the cytoplasm. The catalysed reaction is N(6)-carboxybiotinyl-L-lysyl-[protein] + acetyl-CoA = N(6)-biotinyl-L-lysyl-[protein] + malonyl-CoA. Its pathway is lipid metabolism; malonyl-CoA biosynthesis; malonyl-CoA from acetyl-CoA: step 1/1. Functionally, component of the acetyl coenzyme A carboxylase (ACC) complex. First, biotin carboxylase catalyzes the carboxylation of biotin on its carrier protein (BCCP) and then the CO(2) group is transferred by the carboxyltransferase to acetyl-CoA to form malonyl-CoA. The sequence is that of Acetyl-coenzyme A carboxylase carboxyl transferase subunit alpha from Mesorhizobium japonicum (strain LMG 29417 / CECT 9101 / MAFF 303099) (Mesorhizobium loti (strain MAFF 303099)).